Consider the following 526-residue polypeptide: Tyrosine-protein kinase transforming protein Src (526 aa).

Positions methionine 1–glycine 52 are disordered. Residue glycine 2 is the site of N-myristoyl glycine; by host attachment. Positions lysine 7–histidine 25 are enriched in basic and acidic residues. 2 consecutive SH3 domains span residues threonine 71–proline 139 and glycine 81–serine 142. Residues tryptophan 148–cysteine 245 enclose the SH2 domain. A Protein kinase domain is found at leucine 267–leucine 517. Residues leucine 273–valine 281 and lysine 295 contribute to the ATP site. Aspartate 386 functions as the Proton acceptor in the catalytic mechanism. A Phosphotyrosine; by autocatalysis modification is found at tyrosine 416.

It belongs to the protein kinase superfamily. Tyr protein kinase family. SRC subfamily. As to quaternary structure, homodimer. The phosphorylated form is termed pp60v-src.

The enzyme catalyses L-tyrosyl-[protein] + ATP = O-phospho-L-tyrosyl-[protein] + ADP + H(+). Functionally, this phosphoprotein, required for both the initiation and the maintenance of neoplastic transformation, is a protein kinase that catalyzes the phosphorylation of tyrosine residues in vitro. In Gallus gallus (Chicken), this protein is Tyrosine-protein kinase transforming protein Src (V-SRC).